Here is a 313-residue protein sequence, read N- to C-terminus: MGNCLSASTLPTEPNAPKSVEEGVKVFTVADLKKATNDFGNQMELGESLGYINPKTLSPAKKGVGMAVAVKKIYLANEQAFQDWLVDVEFLRHNSHPSLVKLIGYCYDRDMLFIVSEYFPNGSLGSYISRDSRPKSLPWETRLKISIGAAQCLAFLHSRKQAGLYRRYLTASKILLDSDFNARVSYFGKPKVSLDELVYTIGFSNVAPRYQYPPPEYILSGMSNMAGDVYSFGVILLKMLTGLGKDLTISAKREIKNKKYNIVEMIDPDLKNSYPLEAGRLMCELIKQCLEVDPKMRPTMQEVLDNLNAIAQI.

Residue Gly-2 is the site of N-myristoyl glycine attachment. The region spanning 43–311 (MELGESLGYI…EVLDNLNAIA (269 aa)) is the Protein kinase domain. Residues 49–57 (LGYINPKTL) and Lys-71 contribute to the ATP site.

Belongs to the protein kinase superfamily. Ser/Thr protein kinase family. Component of an immune signaling complex made of, at least, SZE1, BKN2/SZE2, ZAR1 and ZED1. Interacts directly with ZED1, ZAR1 and Pseudomonas syringae HOPZ1A at the plasma membrane. N-terminal myristoylation is critical for plasma membrane localization and implication in defense responses. In terms of processing, autophosphorylated. As to expression, expressed in roots, seedlings, rosette leaves, floral organs, siliques and inflorescence stems.

The protein resides in the cell membrane. The enzyme catalyses L-seryl-[protein] + ATP = O-phospho-L-seryl-[protein] + ADP + H(+). It carries out the reaction L-threonyl-[protein] + ATP = O-phospho-L-threonyl-[protein] + ADP + H(+). Its function is as follows. Together with BKN2/SZE2 and ZED1, required for effector-triggered immunity (e.g. Pseudomonas syringae effector type III HopZ1a) via the activation of ZAR1, thus being essential for resistance against P.syringae pv. tomato DC3000 expressing HopZ1a. The polypeptide is Serine/threonine-protein kinase SZE1 (Arabidopsis thaliana (Mouse-ear cress)).